The chain runs to 276 residues: Ribosomal RNA small subunit methyltransferase J (276 aa).

Residues Glu-135 to Arg-136 and Asp-191 contribute to the S-adenosyl-L-methionine site.

The protein belongs to the methyltransferase superfamily. RsmJ family.

It localises to the cytoplasm. It carries out the reaction guanosine(1516) in 16S rRNA + S-adenosyl-L-methionine = N(2)-methylguanosine(1516) in 16S rRNA + S-adenosyl-L-homocysteine + H(+). Functionally, specifically methylates the guanosine in position 1516 of 16S rRNA. This Hydrogenovibrio crunogenus (strain DSM 25203 / XCL-2) (Thiomicrospira crunogena) protein is Ribosomal RNA small subunit methyltransferase J.